The primary structure comprises 413 residues: Gamma-glutamyl phosphate reductase (413 aa).

Belongs to the gamma-glutamyl phosphate reductase family.

The protein resides in the cytoplasm. The catalysed reaction is L-glutamate 5-semialdehyde + phosphate + NADP(+) = L-glutamyl 5-phosphate + NADPH + H(+). The protein operates within amino-acid biosynthesis; L-proline biosynthesis; L-glutamate 5-semialdehyde from L-glutamate: step 2/2. Catalyzes the NADPH-dependent reduction of L-glutamate 5-phosphate into L-glutamate 5-semialdehyde and phosphate. The product spontaneously undergoes cyclization to form 1-pyrroline-5-carboxylate. This chain is Gamma-glutamyl phosphate reductase, found in Lactococcus lactis subsp. lactis (strain IL1403) (Streptococcus lactis).